We begin with the raw amino-acid sequence, 314 residues long: Serine/threonine-protein phosphatase CPPED1 (314 aa).

Phosphoserine is present on serine 2. A catalytic region spans residues 47–250 (KAWSTGDCDN…KVVFSGHYHR (204 aa)). The a divalent metal cation site is built by aspartate 53, aspartate 90, asparagine 127, and histidine 247. The residue at position 294 (serine 294) is a Phosphoserine.

Belongs to the metallophosphoesterase superfamily. CPPED1 family. It depends on a divalent metal cation as a cofactor. As to expression, expressed in subcutaneous adipose tissue.

It is found in the cytoplasm. It carries out the reaction O-phospho-L-seryl-[protein] + H2O = L-seryl-[protein] + phosphate. It catalyses the reaction O-phospho-L-threonyl-[protein] + H2O = L-threonyl-[protein] + phosphate. Functionally, protein phosphatase that dephosphorylates AKT family kinase specifically at 'Ser-473', blocking cell cycle progression and promoting cell apoptosis. May play an inhibitory role in glucose uptake by adipocytes. This is Serine/threonine-protein phosphatase CPPED1 (CPPED1) from Homo sapiens (Human).